The chain runs to 445 residues: MISLNIEKTFGFISKEKVSAYEAEVKAAQEMLEKGTGEGNDFLGWLHLPSSISKEHLADLNATAKVLRDNCEVVIVAGIGGSYLGARAVIEALSNSFTWLQDKKTAPVMIYAGHNISEDYLYELTEYLKDKKFGVINISKSGTTTETALAFRLLKKQCEDQRGKETAKKVIVAVTDAKKGAARVTADKEGYKTFIIPDNVGGRFSVLTPVGLLPIAVAGFDIDKLVAGAADMEKACGSDVPFAENPAAIYAATRNELYRQGKKIEILVNFCPKLHYVSEWWKQLYGESEGKDNKGIFPASVDFSTDLHSMGQWIQEGERSIFETVISLDKVDHKLEVPFDEANLDGLNFLAGKRVDEVNKMAELGTQLAHVDGGVPNMRIVLPELSEYNIGGLLYFFEKACGISGYLLGVNPFNQPGVEAYKKNMFALLNKPGYEEESKAIQAKL.

The active-site Proton donor is Glu-287. Active-site residues include His-308 and Lys-422.

Belongs to the GPI family.

It is found in the cytoplasm. It carries out the reaction alpha-D-glucose 6-phosphate = beta-D-fructose 6-phosphate. It functions in the pathway carbohydrate biosynthesis; gluconeogenesis. Its pathway is carbohydrate degradation; glycolysis; D-glyceraldehyde 3-phosphate and glycerone phosphate from D-glucose: step 2/4. Its function is as follows. Catalyzes the reversible isomerization of glucose-6-phosphate to fructose-6-phosphate. The polypeptide is Glucose-6-phosphate isomerase (Bacteroides thetaiotaomicron (strain ATCC 29148 / DSM 2079 / JCM 5827 / CCUG 10774 / NCTC 10582 / VPI-5482 / E50)).